Here is a 99-residue protein sequence, read N- to C-terminus: Turripeptide OL71 (99 aa).

Contains 5 disulfide bonds. As to expression, expressed by the venom duct.

It is found in the secreted. In terms of biological role, acts as a neurotoxin by inhibiting an ion channel. This Iotyrris olangoensis (Sea snail) protein is Turripeptide OL71.